Consider the following 150-residue polypeptide: Dual specificity protein phosphatase 23 (150 aa).

One can recognise a Tyrosine-protein phosphatase domain in the interval 7 to 150 (NFSWVLPGRL…AVFQFYQRTK (144 aa)). Cysteine 95 acts as the Phosphocysteine intermediate in catalysis.

The protein belongs to the protein-tyrosine phosphatase family. Non-receptor class dual specificity subfamily. Widely expressed.

Its subcellular location is the cytoplasm. The protein localises to the cytosol. It localises to the nucleus. It carries out the reaction O-phospho-L-tyrosyl-[protein] + H2O = L-tyrosyl-[protein] + phosphate. The catalysed reaction is O-phospho-L-seryl-[protein] + H2O = L-seryl-[protein] + phosphate. The enzyme catalyses O-phospho-L-threonyl-[protein] + H2O = L-threonyl-[protein] + phosphate. Functionally, protein phosphatase that mediates dephosphorylation of proteins phosphorylated on Tyr and Ser/Thr residues. In vitro, it can dephosphorylate p44-ERK1 (MAPK3) but not p54 SAPK-beta (MAPK10) in vitro. Able to enhance activation of JNK and p38 (MAPK14). This Mus musculus (Mouse) protein is Dual specificity protein phosphatase 23 (Dusp23).